We begin with the raw amino-acid sequence, 289 residues long: Cytochrome bc1 complex cytochrome c subunit (289 aa).

Over residues M1–R11 the composition is skewed to basic residues. The interval M1–R28 is disordered. Residues G37–T55 traverse the membrane as a helical segment. Cytochrome c domains lie at A69–G149 and T170–I248. Residues C82, C85, H86, C183, C186, and H187 each contribute to the heme c site. A helical membrane pass occupies residues G267 to A287.

In terms of assembly, the cytochrome bc1 complex is composed of a cytochrome b (QcrB), the Rieske iron-sulfur protein (QcrA) and a diheme cytochrome c (QcrC) subunit. Binds 2 heme c groups covalently per subunit.

It localises to the cell membrane. It catalyses the reaction a quinol + 2 Fe(III)-[cytochrome c](out) = a quinone + 2 Fe(II)-[cytochrome c](out) + 2 H(+)(out). In terms of biological role, cytochrome b subunit of the cytochrome bc1 complex, an essential component of the respiratory electron transport chain required for ATP synthesis. The bc1 complex catalyzes the oxidation of ubiquinol and the reduction of cytochrome c in the respiratory chain. The bc1 complex operates through a Q-cycle mechanism that couples electron transfer to generation of the proton gradient that drives ATP synthesis. The sequence is that of Cytochrome bc1 complex cytochrome c subunit (qcrC) from Mycobacterium leprae (strain TN).